Consider the following 78-residue polypeptide: Large ribosomal subunit protein bL28 (78 aa).

Residues 1–30 (MAAHCQVTGAQPGFGHSISHSHRRTKRRWN) are disordered. The segment covering 19-30 (SHSHRRTKRRWN) has biased composition (basic residues).

The protein belongs to the bacterial ribosomal protein bL28 family.

The chain is Large ribosomal subunit protein bL28 from Kocuria rhizophila (strain ATCC 9341 / DSM 348 / NBRC 103217 / DC2201).